The chain runs to 153 residues: NADH dehydrogenase [ubiquinone] 1 beta subcomplex subunit 11, mitochondrial (153 aa).

The transit peptide at 1–29 (MAAGLFGLSARRLLAAAATRGLPAARVRW) directs the protein to the mitochondrion. The interval 40–77 (PSAVAGKRPPEPTTQWQEDPEPEDENLYEKNPDSHGYD) is disordered. Basic and acidic residues predominate over residues 66–77 (LYEKNPDSHGYD). Residues 89-109 (LVFFFGVSIILVLGSTFVAYL) traverse the membrane as a helical segment.

This sequence belongs to the complex I NDUFB11 subunit family. In terms of assembly, complex I is composed of 45 different subunits. Interacts with BCAP31.

Its subcellular location is the mitochondrion inner membrane. In terms of biological role, accessory subunit of the mitochondrial membrane respiratory chain NADH dehydrogenase (Complex I), that is believed not to be involved in catalysis. Complex I functions in the transfer of electrons from NADH to the respiratory chain. The immediate electron acceptor for the enzyme is believed to be ubiquinone. The sequence is that of NADH dehydrogenase [ubiquinone] 1 beta subcomplex subunit 11, mitochondrial (NDUFB11) from Gorilla gorilla gorilla (Western lowland gorilla).